Reading from the N-terminus, the 320-residue chain is Cytochrome f (320 aa).

An N-terminal signal peptide occupies residues 1-35; it reads MHTKNLFYSRPQQITQYLSAFLMMVILTRTSISSA. Residues tyrosine 36, cysteine 56, cysteine 59, and histidine 60 each contribute to the heme site. Residues 286-306 form a helical membrane-spanning segment; it reads VQVLLFFFASIILAQIFLVLK.

Belongs to the cytochrome f family. As to quaternary structure, the 4 large subunits of the cytochrome b6-f complex are cytochrome b6, subunit IV (17 kDa polypeptide, petD), cytochrome f and the Rieske protein, while the 4 small subunits are PetG, PetL, PetM and PetN. The complex functions as a dimer. It depends on heme as a cofactor.

The protein localises to the plastid thylakoid membrane. Component of the cytochrome b6-f complex, which mediates electron transfer between photosystem II (PSII) and photosystem I (PSI), cyclic electron flow around PSI, and state transitions. The protein is Cytochrome f of Cuscuta obtusiflora (Peruvian dodder).